Here is a 361-residue protein sequence, read N- to C-terminus: Phospho-N-acetylmuramoyl-pentapeptide-transferase (361 aa).

10 helical membrane passes run 21–41 (YLTI…LMLG), 69–89 (VGTP…SILI), 93–113 (WSNI…AIGF), 131–151 (SIKF…IILI), 168–188 (IILP…IVGS), 200–220 (GLAI…AYFS), 240–260 (LFII…FNAY), 264–284 (IFMG…IAIL), 289–309 (ILLF…IIQV), and 338–358 (KIIV…LASI).

It belongs to the glycosyltransferase 4 family. MraY subfamily. It depends on Mg(2+) as a cofactor.

Its subcellular location is the cell inner membrane. It catalyses the reaction UDP-N-acetyl-alpha-D-muramoyl-L-alanyl-gamma-D-glutamyl-meso-2,6-diaminopimeloyl-D-alanyl-D-alanine + di-trans,octa-cis-undecaprenyl phosphate = di-trans,octa-cis-undecaprenyl diphospho-N-acetyl-alpha-D-muramoyl-L-alanyl-D-glutamyl-meso-2,6-diaminopimeloyl-D-alanyl-D-alanine + UMP. It participates in cell wall biogenesis; peptidoglycan biosynthesis. Catalyzes the initial step of the lipid cycle reactions in the biosynthesis of the cell wall peptidoglycan: transfers peptidoglycan precursor phospho-MurNAc-pentapeptide from UDP-MurNAc-pentapeptide onto the lipid carrier undecaprenyl phosphate, yielding undecaprenyl-pyrophosphoryl-MurNAc-pentapeptide, known as lipid I. This chain is Phospho-N-acetylmuramoyl-pentapeptide-transferase, found in Vesicomyosocius okutanii subsp. Calyptogena okutanii (strain HA).